Reading from the N-terminus, the 206-residue chain is MTKRTSAKHKIDRRMGENIWGRPKSPVNRREYGPGQHGQRRKGKISDFGIQLRAKQKLKGYYGDLTEKQFRRIYAEAERVKGDTGENLIGLLERRLDAVVYRAKFVATVFAARQFVNHKHVRVNGKIVNIPSYRVKEGDVIEVRDRSKQMVALIEATQLAERDVPDYIEADHSKMQATFVRTPALGDVPYPVMMEPNLVVEFYAKN.

The segment at 18–46 (NIWGRPKSPVNRREYGPGQHGQRRKGKIS) is disordered. Positions 94–154 (RRLDAVVYRA…DRSKQMVALI (61 aa)) constitute an S4 RNA-binding domain.

It belongs to the universal ribosomal protein uS4 family. Part of the 30S ribosomal subunit. Contacts protein S5. The interaction surface between S4 and S5 is involved in control of translational fidelity.

One of the primary rRNA binding proteins, it binds directly to 16S rRNA where it nucleates assembly of the body of the 30S subunit. Functionally, with S5 and S12 plays an important role in translational accuracy. The sequence is that of Small ribosomal subunit protein uS4 from Roseobacter denitrificans (strain ATCC 33942 / OCh 114) (Erythrobacter sp. (strain OCh 114)).